The following is a 393-amino-acid chain: Aspartate aminotransferase (393 aa).

Residues glycine 38, tryptophan 124, and asparagine 174 each coordinate L-aspartate. At lysine 237 the chain carries N6-(pyridoxal phosphate)lysine.

This sequence belongs to the class-I pyridoxal-phosphate-dependent aminotransferase family. Homodimer. The cofactor is pyridoxal 5'-phosphate.

It is found in the cytoplasm. The enzyme catalyses L-aspartate + 2-oxoglutarate = oxaloacetate + L-glutamate. The chain is Aspartate aminotransferase (aspC) from Geobacillus stearothermophilus (Bacillus stearothermophilus).